The sequence spans 410 residues: Tryptophan synthase beta chain (410 aa).

The residue at position 100 (Lys-100) is an N6-(pyridoxal phosphate)lysine.

It belongs to the TrpB family. In terms of assembly, tetramer of two alpha and two beta chains. Pyridoxal 5'-phosphate serves as cofactor.

The enzyme catalyses (1S,2R)-1-C-(indol-3-yl)glycerol 3-phosphate + L-serine = D-glyceraldehyde 3-phosphate + L-tryptophan + H2O. It functions in the pathway amino-acid biosynthesis; L-tryptophan biosynthesis; L-tryptophan from chorismate: step 5/5. In terms of biological role, the beta subunit is responsible for the synthesis of L-tryptophan from indole and L-serine. This chain is Tryptophan synthase beta chain, found in Pyrobaculum aerophilum (strain ATCC 51768 / DSM 7523 / JCM 9630 / CIP 104966 / NBRC 100827 / IM2).